The sequence spans 617 residues: Probable Xaa-Pro aminopeptidase P (617 aa).

The Mn(2+) site is built by Asp414, Asp425, Glu523, and Glu537.

It belongs to the peptidase M24B family. The cofactor is Mn(2+).

The enzyme catalyses Release of any N-terminal amino acid, including proline, that is linked to proline, even from a dipeptide or tripeptide.. Its function is as follows. Catalyzes the removal of a penultimate prolyl residue from the N-termini of peptides. The protein is Probable Xaa-Pro aminopeptidase P (AMPP) of Ajellomyces capsulatus (strain G186AR / H82 / ATCC MYA-2454 / RMSCC 2432) (Darling's disease fungus).